Reading from the N-terminus, the 365-residue chain is Histidinol-phosphate aminotransferase (365 aa).

The residue at position 220 (K220) is an N6-(pyridoxal phosphate)lysine.

This sequence belongs to the class-II pyridoxal-phosphate-dependent aminotransferase family. Histidinol-phosphate aminotransferase subfamily. In terms of assembly, homodimer. The cofactor is pyridoxal 5'-phosphate.

The enzyme catalyses L-histidinol phosphate + 2-oxoglutarate = 3-(imidazol-4-yl)-2-oxopropyl phosphate + L-glutamate. The protein operates within amino-acid biosynthesis; L-histidine biosynthesis; L-histidine from 5-phospho-alpha-D-ribose 1-diphosphate: step 7/9. This Xylella fastidiosa (strain Temecula1 / ATCC 700964) protein is Histidinol-phosphate aminotransferase (hisC).